The sequence spans 352 residues: Glutamine synthetase (352 aa).

The GS beta-grasp domain occupies 3-82 (YQAEYIWIDG…LCEVQLTDFT (80 aa)). A GS catalytic domain is found at 87–352 (TRAAALGVAE…TTPAPAEASV (266 aa)). Mg(2+)-binding residues include glutamate 108 and glutamate 110. An ATP-binding site is contributed by glutamate 164. Glutamate 169 and glutamate 176 together coordinate Mg(2+). Glutamate 272 serves as a coordination point for L-glutamate.

This sequence belongs to the glutamine synthetase family. In terms of assembly, homooctamer and homotetramer. Mg(2+) is required as a cofactor.

The protein resides in the cytoplasm. The enzyme catalyses L-glutamate + NH4(+) + ATP = L-glutamine + ADP + phosphate + H(+). In terms of biological role, catalyzes the ATP-dependent biosynthesis of glutamine from glutamate and ammonia. In Frankia alni, this protein is Glutamine synthetase.